The primary structure comprises 186 residues: High mobility group protein B4 (186 aa).

2 DNA-binding regions (HMG box) span residues 9–79 (PKAN…MNYV) and 93–161 (PRRP…ELYR). A disordered region spans residues 77-98 (NYVGKRKKRRKRDPQEPRRPPS).

This sequence belongs to the HMGB family.

It is found in the nucleus. It localises to the chromosome. The chain is High mobility group protein B4 (HMGB4) from Homo sapiens (Human).